The chain runs to 340 residues: MGVPIGEIIPRKEIELENLYGKKIAIDALNAIYQFLSTIRQKDGTPLMDSKGRITSHLSGLFYRTINLMEAGIKPVYVFDGEPPEFKKKELEKRREAREEAEEKWREALEKGEIEEARKYAQRATRVNEMLIEDAKKLLELMGIPIVQAPSEGEAQAAYMAAKGSVYASASQDYDSLLFGAPRLVRNLTITGKRKLPGKNVYVEIKPELIILEEVLKELKLTREKLIELAILVGTDYNPGGIKGIGLKKALEIVRHSKDPLAKFQKQSDVDLYAIKEFFLNPPVTDNYNLVWRDPDEEGILKFLCDEHDFSEERVKNGLERLKKAIKSGKQSTLESWFKR.

Residues 1–98 (MGVPIGEIIP…KELEKRREAR (98 aa)) are N-domain. Residues Asp27, Asp80, Glu152, Glu154, Asp173, Asp175, and Asp236 each coordinate Mg(2+). An I-domain region spans residues 116–258 (EARKYAQRAT…KALEIVRHSK (143 aa)). Residues 330–338 (KQSTLESWF) form an interaction with PCNA region.

It belongs to the XPG/RAD2 endonuclease family. FEN1 subfamily. Interacts with PCNA. PCNA stimulates the nuclease activity without altering cleavage specificity. Mg(2+) is required as a cofactor.

Functionally, structure-specific nuclease with 5'-flap endonuclease and 5'-3' exonuclease activities involved in DNA replication and repair. During DNA replication, cleaves the 5'-overhanging flap structure that is generated by displacement synthesis when DNA polymerase encounters the 5'-end of a downstream Okazaki fragment. Binds the unpaired 3'-DNA end and kinks the DNA to facilitate 5' cleavage specificity. Cleaves one nucleotide into the double-stranded DNA from the junction in flap DNA, leaving a nick for ligation. Also involved in the base excision repair (BER) pathway. Acts as a genome stabilization factor that prevents flaps from equilibrating into structures that lead to duplications and deletions. Also possesses 5'-3' exonuclease activity on nicked or gapped double-stranded DNA. This is Flap endonuclease 1 from Pyrococcus furiosus (strain ATCC 43587 / DSM 3638 / JCM 8422 / Vc1).